Consider the following 394-residue polypeptide: 8-amino-7-oxononanoate synthase (394 aa).

Arg-21 lines the substrate pocket. 112–113 (GY) contacts pyridoxal 5'-phosphate. Residue His-137 coordinates substrate. Residues Ser-183, His-211, and Thr-239 each contribute to the pyridoxal 5'-phosphate site. The residue at position 242 (Lys-242) is an N6-(pyridoxal phosphate)lysine. Thr-358 serves as a coordination point for substrate.

It belongs to the class-II pyridoxal-phosphate-dependent aminotransferase family. BioF subfamily. Homodimer. Pyridoxal 5'-phosphate is required as a cofactor.

It carries out the reaction 6-carboxyhexanoyl-[ACP] + L-alanine + H(+) = (8S)-8-amino-7-oxononanoate + holo-[ACP] + CO2. It functions in the pathway cofactor biosynthesis; biotin biosynthesis. In terms of biological role, catalyzes the decarboxylative condensation of pimeloyl-[acyl-carrier protein] and L-alanine to produce 8-amino-7-oxononanoate (AON), [acyl-carrier protein], and carbon dioxide. The polypeptide is 8-amino-7-oxononanoate synthase (Burkholderia pseudomallei (strain 1710b)).